Reading from the N-terminus, the 420-residue chain is UDP-N-acetylglucosamine 1-carboxyvinyltransferase (420 aa).

22–23 (KN) serves as a coordination point for phosphoenolpyruvate. Residue arginine 91 participates in UDP-N-acetyl-alpha-D-glucosamine binding. The active-site Proton donor is the cysteine 115. At cysteine 115 the chain carries 2-(S-cysteinyl)pyruvic acid O-phosphothioketal. UDP-N-acetyl-alpha-D-glucosamine-binding positions include 120–124 (RPVDL), 160–163 (KVSV), aspartate 305, and isoleucine 327.

This sequence belongs to the EPSP synthase family. MurA subfamily.

It localises to the cytoplasm. The enzyme catalyses phosphoenolpyruvate + UDP-N-acetyl-alpha-D-glucosamine = UDP-N-acetyl-3-O-(1-carboxyvinyl)-alpha-D-glucosamine + phosphate. It participates in cell wall biogenesis; peptidoglycan biosynthesis. Functionally, cell wall formation. Adds enolpyruvyl to UDP-N-acetylglucosamine. This chain is UDP-N-acetylglucosamine 1-carboxyvinyltransferase, found in Pectobacterium atrosepticum (strain SCRI 1043 / ATCC BAA-672) (Erwinia carotovora subsp. atroseptica).